We begin with the raw amino-acid sequence, 125 residues long: Large ribosomal subunit protein bL19 (125 aa).

The protein belongs to the bacterial ribosomal protein bL19 family.

In terms of biological role, this protein is located at the 30S-50S ribosomal subunit interface and may play a role in the structure and function of the aminoacyl-tRNA binding site. In Wolbachia pipientis wMel, this protein is Large ribosomal subunit protein bL19.